We begin with the raw amino-acid sequence, 370 residues long: Dual-specificity RNA methyltransferase RlmN (370 aa).

Catalysis depends on glutamate 93, which acts as the Proton acceptor. Residues 99–337 (EEGRGTLCVS…VTTVRKTRGD (239 aa)) form the Radical SAM core domain. The cysteines at positions 106 and 343 are disulfide-linked. [4Fe-4S] cluster-binding residues include cysteine 113, cysteine 117, and cysteine 120. Residues 167–168 (GE), serine 199, 221–223 (SLH), and asparagine 300 each bind S-adenosyl-L-methionine. The active-site S-methylcysteine intermediate is cysteine 343.

The protein belongs to the radical SAM superfamily. RlmN family. [4Fe-4S] cluster serves as cofactor.

Its subcellular location is the cytoplasm. The enzyme catalyses adenosine(2503) in 23S rRNA + 2 reduced [2Fe-2S]-[ferredoxin] + 2 S-adenosyl-L-methionine = 2-methyladenosine(2503) in 23S rRNA + 5'-deoxyadenosine + L-methionine + 2 oxidized [2Fe-2S]-[ferredoxin] + S-adenosyl-L-homocysteine. It carries out the reaction adenosine(37) in tRNA + 2 reduced [2Fe-2S]-[ferredoxin] + 2 S-adenosyl-L-methionine = 2-methyladenosine(37) in tRNA + 5'-deoxyadenosine + L-methionine + 2 oxidized [2Fe-2S]-[ferredoxin] + S-adenosyl-L-homocysteine. Specifically methylates position 2 of adenine 2503 in 23S rRNA and position 2 of adenine 37 in tRNAs. m2A2503 modification seems to play a crucial role in the proofreading step occurring at the peptidyl transferase center and thus would serve to optimize ribosomal fidelity. This Francisella tularensis subsp. mediasiatica (strain FSC147) protein is Dual-specificity RNA methyltransferase RlmN.